The following is a 45-amino-acid chain: Globin, minor monomeric component (45 aa).

In terms of domain architecture, Globin spans 1–45 (GLSAAERQVVASCWKDIAGADXGAGVGKEXLIKFISAAPEMAAVF).

Belongs to the globin family. In terms of assembly, monomer.

This Glycera dibranchiata (Bloodworm) protein is Globin, minor monomeric component.